Here is a 176-residue protein sequence, read N- to C-terminus: Cytochrome b (176 aa).

Helical transmembrane passes span 33-53 (FGSL…FLAM), 77-98 (WVLR…YLHV), and 113-133 (WNMG…GYVL). H83 and H97 together coordinate heme b.

The protein belongs to the cytochrome b family. The cytochrome bc1 complex contains 11 subunits: 3 respiratory subunits (MT-CYB, CYC1 and UQCRFS1), 2 core proteins (UQCRC1 and UQCRC2) and 6 low-molecular weight proteins (UQCRH/QCR6, UQCRB/QCR7, UQCRQ/QCR8, UQCR10/QCR9, UQCR11/QCR10 and a cleavage product of UQCRFS1). This cytochrome bc1 complex then forms a dimer. Heme b is required as a cofactor.

It localises to the mitochondrion inner membrane. Component of the ubiquinol-cytochrome c reductase complex (complex III or cytochrome b-c1 complex) that is part of the mitochondrial respiratory chain. The b-c1 complex mediates electron transfer from ubiquinol to cytochrome c. Contributes to the generation of a proton gradient across the mitochondrial membrane that is then used for ATP synthesis. This Nycticeius humeralis (Evening bat) protein is Cytochrome b (MT-CYB).